A 340-amino-acid polypeptide reads, in one-letter code: uncharacterized protein (340 aa).

Basic and acidic residues predominate over residues 193 to 207; that stretch reads KELPKEKKKSDGDKT. The segment at 193 to 340 is disordered; the sequence is KELPKEKKKS…FIPLQPKKKI (148 aa). The span at 217-228 shows a compositional bias: low complexity; that stretch reads FFGFWGHSGSKS. Residues 235 to 244 are compositionally biased toward basic and acidic residues; sequence EKPIEAKNEI. Composition is skewed to polar residues over residues 263 to 279 and 307 to 328; these read SDKN…SDQQ and PAQS…SLTL.

This is an uncharacterized protein from Saccharomyces cerevisiae (strain ATCC 204508 / S288c) (Baker's yeast).